The primary structure comprises 315 residues: Olfactory receptor 4E1 (315 aa).

Residues 1-33 (MEEAILLNQTSLVTYFRLRGLSVNHKARIAMFS) are Extracellular-facing. The N-linked (GlcNAc...) asparagine glycan is linked to N8. Residues 34–54 (MFLIFYVLTLIGNVLIVITII) traverse the membrane as a helical segment. Residues 55 to 61 (YDHRLHT) are Cytoplasmic-facing. A helical membrane pass occupies residues 62 to 82 (PMYFFLSNLSFIDVCHSTVTV). Residues 83-101 (PKMLRDVWSEEKLISFDAC) are Extracellular-facing. Residues C101 and C183 are joined by a disulfide bond. The chain crosses the membrane as a helical span at residues 102 to 122 (VTQMFFLHLFACTEIFLLTVM). The Cytoplasmic segment spans residues 123–143 (AYDRYVAICKPLQYMIVMNWK). A helical membrane pass occupies residues 144 to 164 (VCVLLAVALWTGGTIHSIALT). Residues 165-208 (SLTIKLPYCGPDEIDNFFCDVPQVIKLACIDTHVIEILIVSNSG) lie on the Extracellular side of the membrane. Residues 209–229 (LISVVCFVVLVVSYAVILVSL) form a helical membrane-spanning segment. The Cytoplasmic portion of the chain corresponds to 230–240 (RQQISKGKRKA). Residues 241–261 (LSTCAAHLTVVTLFLGHCIFI) traverse the membrane as a helical segment. Residues 262 to 272 (YSRPSTSLPED) are Extracellular-facing. Residues 273–293 (KVVSVFFTAVTPLLNPIIYTL) traverse the membrane as a helical segment. At 294-315 (RNEEMKSALNKLVGRKERKEEK) the chain is on the cytoplasmic side.

This sequence belongs to the G-protein coupled receptor 1 family.

It localises to the cell membrane. Odorant receptor. In Homo sapiens (Human), this protein is Olfactory receptor 4E1 (OR4E1).